Consider the following 522-residue polypeptide: Putative malate dehydrogenase 1B (522 aa).

The interval 495 to 522 (EETEKSSSEDTPEAAAAAVSTGDETVPS) is disordered.

Belongs to the LDH/MDH superfamily. MDH type 2 family.

In Branchiostoma floridae (Florida lancelet), this protein is Putative malate dehydrogenase 1B (MDH1B).